The following is a 471-amino-acid chain: RNA N(6)-adenosine-methyltransferase mettl16 (471 aa).

The RNA-binding stretch occupies residues 17–20; that stretch reads PPDF. The S-adenosyl-L-methionine site is built by arginine 82, glycine 106, serine 110, glutamate 129, threonine 160, and asparagine 179. Residues 159–163 form a K-loop region; that stretch reads KTLLM. RNA-binding stretches follow at residues 194–206, 245–249, and 272–278; these read SRNS…SSIN, GKKCS, and QGRTMRW. VCR regions lie at residues 284 to 390 and 421 to 470; these read FYDD…RAQE and FLFK…VAKP. The tract at residues 375 to 412 is disordered; sequence RREQGRHLRELPRAQEPPSEETSVTEQQQQPDIPPESP.

It belongs to the methyltransferase superfamily. METTL16/RlmF family.

Its subcellular location is the nucleus. It localises to the cytoplasm. The catalysed reaction is adenosine in U6 snRNA + S-adenosyl-L-methionine = N(6)-methyladenosine in U6 snRNA + S-adenosyl-L-homocysteine + H(+). It catalyses the reaction an adenosine in mRNA + S-adenosyl-L-methionine = an N(6)-methyladenosine in mRNA + S-adenosyl-L-homocysteine + H(+). With respect to regulation, methyltransferase activity is autoinhibited by the K-loop region that blocks S-adenosyl-L-methionine-binding. Upon activation, K-loop changes conformation, allowing S-adenosyl-L-methionine-binding and subsequent methyltransferase activity. mRNA N6-adenosine-methyltransferase activity is inhibited by zinc. Its function is as follows. RNA N6-methyltransferase that methylates adenosine residues at the N(6) position of a subset of RNAs and is involved in S-adenosyl-L-methionine homeostasis by regulating expression of MAT2A transcripts. Able to N6-methylate a subset of mRNAs and U6 small nuclear RNAs (U6 snRNAs). In contrast to the METTL3-METTL14 heterodimer, only able to methylate a limited number of RNAs: requires both a 5'UACAGAGAA-3' nonamer sequence and a specific RNA structure. Plays a key role in S-adenosyl-L-methionine homeostasis by mediating N6-methylation of MAT2A mRNAs, altering splicing of MAT2A transcripts: in presence of S-adenosyl-L-methionine, binds the 3'-UTR region of MAT2A mRNA and specifically N6-methylates the first hairpin of MAT2A mRNA, impairing MAT2A splicing and protein expression. In S-adenosyl-L-methionine-limiting conditions, binds the 3'-UTR region of MAT2A mRNA but stalls due to the lack of a methyl donor, preventing N6-methylation and promoting expression of MAT2A. In addition to mRNAs, also able to mediate N6-methylation of U6 small nuclear RNA (U6 snRNA): specifically N6-methylates adenine in position 43 of U6 snRNAs. This is RNA N(6)-adenosine-methyltransferase mettl16 (mettl16) from Danio rerio (Zebrafish).